Consider the following 361-residue polypeptide: P2Y purinoceptor 4 (361 aa).

Topologically, residues 1–30 (MTSADSLLFTSLGPSPSSGDGDCKFNEEFK) are extracellular. The chain crosses the membrane as a helical span at residues 31 to 58 (FILLPLSYAVVFVLGLALNAPTLWLFLF). The Cytoplasmic segment spans residues 59-68 (RLRPWDATAT). A helical membrane pass occupies residues 69–91 (YMFHLALSDTLYVLSLPTLVYYY). The Extracellular segment spans residues 92 to 108 (AARNHWPFGTGFCKFVR). C104 and C181 are oxidised to a cystine. A helical transmembrane segment spans residues 109–127 (FLFYWNLYCSVLFLTCISV). At 128-149 (HRYMGICHPLRAIRWGRPRFAG) the chain is on the cytoplasmic side. Residues 150–170 (LLCLGVWLVVAGCLVPNLFFV) form a helical membrane-spanning segment. Residues 171–192 (TTNANGTTILCHDTTLPEEFDH) are Extracellular-facing. An N-linked (GlcNAc...) asparagine glycan is attached at N175. The helical transmembrane segment at 193 to 218 (YVYFSSTIMVLLFGFPFLITLVCYGL) threads the bilayer. The Cytoplasmic portion of the chain corresponds to 219–242 (MARRLYRPLPGAGQSSSRLRSLRT). The helical transmembrane segment at 243–265 (IAVVLTVFAVCFVPFHITRTIYY) threads the bilayer. Residues 266-283 (LARLLNAECRVLNIVNVV) are Extracellular-facing. Residues 284 to 305 (YKVTRPLASANSCLDPVLYLFT) traverse the membrane as a helical segment. Residues 306 to 361 (GDKYRNQLQQLCRGSTPKRRTTASSLALVTLHEESISRWADIHQDSIFPAYEGDRL) lie on the Cytoplasmic side of the membrane.

The protein belongs to the G-protein coupled receptor 1 family. Post-translationally, phosphorylation of Ser-329 and Ser-330 is a key step in agonist-dependent desensitization and loss of surface P2RY4. This phosphorylation does not involve PKC, nor other calcium-activated kinases. In terms of tissue distribution, expressed in the liver, intestine, stomach, bladder and lung.

It localises to the cell membrane. Functionally, receptor for ATP and UTP coupled to G-proteins that activate a phosphatidylinositol-calcium second messenger system. The chain is P2Y purinoceptor 4 (P2ry4) from Mus musculus (Mouse).